Here is a 184-residue protein sequence, read N- to C-terminus: ATP-dependent protease subunit HslV (184 aa).

The active site involves Thr-12. Positions 166, 169, and 172 each coordinate Na(+).

Belongs to the peptidase T1B family. HslV subfamily. As to quaternary structure, a double ring-shaped homohexamer of HslV is capped on each side by a ring-shaped HslU homohexamer. The assembly of the HslU/HslV complex is dependent on binding of ATP.

It localises to the cytoplasm. It carries out the reaction ATP-dependent cleavage of peptide bonds with broad specificity.. Its activity is regulated as follows. Allosterically activated by HslU binding. In terms of biological role, protease subunit of a proteasome-like degradation complex believed to be a general protein degrading machinery. The chain is ATP-dependent protease subunit HslV from Brucella anthropi (strain ATCC 49188 / DSM 6882 / CCUG 24695 / JCM 21032 / LMG 3331 / NBRC 15819 / NCTC 12168 / Alc 37) (Ochrobactrum anthropi).